Consider the following 110-residue polypeptide: Disintegrin jerdostatin (110 aa).

An N-terminal signal peptide occupies residues 1-20; sequence MIQVLLVTICLAVFPYQVSS. Residues 21-67 constitute a propeptide that is removed on maturation; that stretch reads KTLKSGSVNEYEVVNPGTVTGLPKGAVKQPEKKHEPMKGNTLQKLPL. The 84-residue stretch at 27 to 110 folds into the Disintegrin domain; that stretch reads SVNEYEVVNP…CECPSYPGNG (84 aa). Cystine bridges form between Cys-68–Cys-77, Cys-73–Cys-96, Cys-74–Cys-101, and Cys-86–Cys-103. Residues 88–90 carry the Cell attachment site; atypical (RTS) motif; it reads RTS.

Belongs to the disintegrin family. Short disintegrin subfamily. As to quaternary structure, monomer. Two conformers are found, they may differ by their disulfide bond connectivities. Conformer 2 is 33 times less active than conformer 1. Conformer 2 may represent a non-native protein. In terms of processing, the C-terminal dipeptide may be post-translationally removed, as seen in disintegrins that possess a KTS integrin-binding motif. As to expression, expressed by the venom gland.

It localises to the secreted. In terms of biological role, recombinant protein inhibits the adhesion of alpha-1/beta-1-K562 (ITGA1/ITGB1) cells to collagen IV with an IC(50) of 80 nM. In Protobothrops jerdonii (Jerdon's pitviper), this protein is Disintegrin jerdostatin.